Here is an 889-residue protein sequence, read N- to C-terminus: MTFTINNTNSTVFDSTNNENMTISEPVQPVSKGPKGITFSGETFIVPETHDMVKTLFDPTVKKSNFELIILSCLFSNLLVFLIPNNQIRIYIFIALYIFWRLSYNFGIGWLLQNQSNHNLLVSWSQKYHLFDPENKGALAQSIQNEIKSQRGENYDIKSMPVEFNTWLIFRKFVDLILMSDFITFCCVVYCSAIKDDYQFINNQSFWLVYSRIVLGSGLILFNLWVKVNAHNTIKDYAWYWGDFFFRQINNEELIFDGVFEMVPHPMYSVGYVGYYGFALIAKSYVVLAIAIFGHFLQMIFLHYIENPHIDKIYGPSKNEINLIKILKLKDLKNFDNLKPLVGLTNFNWMRASDIVNLVLSLTYGIIIPLFANSIKSLFILTVGMKLFESISINLSLTLQSYFKIVTKWSLSNDIPVEKSFSNWAVLYNSLINLTYSSLFGMNLGYFLQKSGSGSSSGGLLFSDWFYLRVFLGLLLIYTQFWINFSIIDSIGYFGWFYGDFFIPKSQSSIKNITTAGVYRYLNNPEQIFGVCGVMGIFLIYPTVENFVCVGLWVVNNFIRINFIEKSHMVKLYGEQEVNRDSGVTKTVKKHLLPEVIQRRMSNDEAYTRVNGTTHERRRRRSSNLHGNSVADSLDNFIRDLRNSSTKLSQQKLIELSQNLSFANSDYKLTIDGLKMQSTESDELKYTTIGTPVTVSWTSPTENHSVRDWIGLYKIVQTSYSRNKTILSSAGRWTWCKEPKGSFIFDKEKLFWEEGVYEFRYHLDGKHDVAYISEPFEIKSIELKVPEFKEDAIKFAENLKLEIFDKVIKLTDINEAISPIANQSDNVIEVYKLISSMISKSTKINITYKIFLNQGDDDLLSIKDVAIKLINIKHVLEELSYNITDKKDV.

The Lumenal portion of the chain corresponds to 1 to 63 (MTFTINNTNS…KTLFDPTVKK (63 aa)). Residues 64–84 (SNFELIILSCLFSNLLVFLIP) form a helical membrane-spanning segment. Residues 85–91 (NNQIRIY) are Cytoplasmic-facing. A helical membrane pass occupies residues 92 to 112 (IFIALYIFWRLSYNFGIGWLL). At 113–173 (QNQSNHNLLV…FNTWLIFRKF (61 aa)) the chain is on the lumenal side. A helical transmembrane segment spans residues 174 to 194 (VDLILMSDFITFCCVVYCSAI). At 195–205 (KDDYQFINNQS) the chain is on the cytoplasmic side. A helical transmembrane segment spans residues 206–226 (FWLVYSRIVLGSGLILFNLWV). Topologically, residues 227-261 (KVNAHNTIKDYAWYWGDFFFRQINNEELIFDGVFE) are lumenal. Residues 262–282 (MVPHPMYSVGYVGYYGFALIA) traverse the membrane as a helical segment. Residues 283 to 284 (KS) are Cytoplasmic-facing. The helical transmembrane segment at 285-305 (YVVLAIAIFGHFLQMIFLHYI) threads the bilayer. The Lumenal portion of the chain corresponds to 306–354 (ENPHIDKIYGPSKNEINLIKILKLKDLKNFDNLKPLVGLTNFNWMRASD). A helical transmembrane segment spans residues 355 to 375 (IVNLVLSLTYGIIIPLFANSI). At 376–377 (KS) the chain is on the cytoplasmic side. The helical transmembrane segment at 378-398 (LFILTVGMKLFESISINLSLT) threads the bilayer. Residues 399-423 (LQSYFKIVTKWSLSNDIPVEKSFSN) lie on the Lumenal side of the membrane. A helical transmembrane segment spans residues 424–444 (WAVLYNSLINLTYSSLFGMNL). Over 445–470 (GYFLQKSGSGSSSGGLLFSDWFYLRV) the chain is Cytoplasmic. The helical transmembrane segment at 471-491 (FLGLLLIYTQFWINFSIIDSI) threads the bilayer. Residues 492 to 527 (GYFGWFYGDFFIPKSQSSIKNITTAGVYRYLNNPEQ) are Lumenal-facing. Residues 528–548 (IFGVCGVMGIFLIYPTVENFV) form a helical membrane-spanning segment. The Cytoplasmic segment spans residues 549 to 889 (CVGLWVVNNF…SYNITDKKDV (341 aa)). Residues 606-627 (AYTRVNGTTHERRRRRSSNLHG) are disordered.

This sequence belongs to the class VI-like SAM-binding methyltransferase superfamily. CHO2 family.

It is found in the endoplasmic reticulum membrane. The enzyme catalyses a 1,2-diacyl-sn-glycero-3-phosphoethanolamine + S-adenosyl-L-methionine = a 1,2-diacyl-sn-glycero-3-phospho-N-methylethanolamine + S-adenosyl-L-homocysteine + H(+). Its pathway is phospholipid metabolism; phosphatidylcholine biosynthesis. Catalyzes the first step of the methylation pathway of phosphatidylcholine biosynthesis, the SAM-dependent methylation of phosphatidylethanolamine (PE) to phosphatidylmonomethylethanolamine (PMME). This is Phosphatidylethanolamine N-methyltransferase (CHO2) from Candida albicans (strain WO-1) (Yeast).